The sequence spans 118 residues: Basic phospholipase A2 nigexine (118 aa).

7 disulfide bridges follow: cysteine 11–cysteine 70, cysteine 26–cysteine 117, cysteine 28–cysteine 44, cysteine 43–cysteine 98, cysteine 50–cysteine 91, cysteine 59–cysteine 84, and cysteine 77–cysteine 89. Ca(2+) is bound by residues tyrosine 27, glycine 29, and glycine 31. Histidine 47 is an active-site residue. Aspartate 48 contacts Ca(2+). The Coagulation factor Xa binding motif signature appears at 52-69; sequence EKAGKMGCWPYFTLYKYK. Residue aspartate 92 is part of the active site.

It belongs to the phospholipase A2 family. Group I subfamily. D49 sub-subfamily. The cofactor is Ca(2+). Expressed by the venom gland.

Its subcellular location is the secreted. The enzyme catalyses a 1,2-diacyl-sn-glycero-3-phosphocholine + H2O = a 1-acyl-sn-glycero-3-phosphocholine + a fatty acid + H(+). Snake venom phospholipase A2 (PLA2) that shows anticoagulant activity, has cytotoxic activity and affects neuromuscular transmission in vitro. PLA2 catalyzes the calcium-dependent hydrolysis of the 2-acyl groups in 3-sn-phosphoglycerides. The sequence is that of Basic phospholipase A2 nigexine from Naja pallida (Red spitting cobra).